We begin with the raw amino-acid sequence, 1222 residues long: Deubiquitinating protein VCPIP1 (1222 aa).

The segment covering 1–21 has biased composition (pro residues); it reads MSQPPPPPPPLPPPPPPPEAP. The segment at 1-36 is disordered; that stretch reads MSQPPPPPPPLPPPPPPPEAPQTPSSLASAAASGGL. Low complexity predominate over residues 25 to 36; sequence SSLASAAASGGL. Residues 208-361 enclose the OTU domain; the sequence is LIPVHVDGDG…RNHYIPLVGI (154 aa). The active site involves Asp-216. Residue Cys-219 is the Nucleophile of the active site. The active site involves His-354. Lys-408 carries the N6-acetyllysine modification. 3 disordered regions span residues 725–776, 989–1009, and 1024–1074; these read SVMQ…KEKK, EATT…LGSG, and AFQG…VFTA. Phosphoserine is present on residues Ser-747 and Ser-757. Positions 755–771 are enriched in low complexity; sequence PSSAPATPTKAPYSPTT. Thr-763 is modified (phosphothreonine). Residues Ser-768, Ser-994, and Ser-998 each carry the phosphoserine modification. Over residues 1041–1050 the composition is skewed to basic and acidic residues; sequence LDPRARETSV. The segment covering 1057–1074 has biased composition (polar residues); the sequence is GTDFSNSSTKTEPSVFTA. Ser-1077 bears the Phosphoserine mark. 2 disordered regions span residues 1113–1175 and 1188–1222; these read VSSI…TETT and ATRS…MDHS. The span at 1143–1157 shows a compositional bias: polar residues; the sequence is VVSSSAKSGSLQTGL. Residues 1163–1175 show a composition bias toward low complexity; that stretch reads LTGGTENLNTETT. Residue Ser-1198 is modified to Phosphoserine. The span at 1200–1209 shows a compositional bias: acidic residues; it reads EELEEMDSQD. Ser-1207 carries the phosphoserine; by ATM modification. Residues 1210–1222 show a composition bias toward polar residues; the sequence is AEMTNTTEPMDHS.

As to quaternary structure, binds VCP and the ternary complex containing STX5A, NSFL1C and VCP. Phosphorylated at Ser-1207 by ATM or ATR following induction of covalent DNA-protein cross-links (DPCs).

The protein localises to the nucleus. It is found in the cytoplasm. The protein resides in the endoplasmic reticulum. It localises to the golgi apparatus. Its subcellular location is the golgi stack. The catalysed reaction is Thiol-dependent hydrolysis of ester, thioester, amide, peptide and isopeptide bonds formed by the C-terminal Gly of ubiquitin (a 76-residue protein attached to proteins as an intracellular targeting signal).. Deubiquitinating enzyme involved in DNA repair and reassembly of the Golgi apparatus and the endoplasmic reticulum following mitosis. Necessary for VCP-mediated reassembly of Golgi stacks after mitosis. Plays a role in VCP-mediated formation of transitional endoplasmic reticulum (tER). Mediates dissociation of the ternary complex containing STX5A, NSFL1C and VCP. Also involved in DNA repair following phosphorylation by ATM or ATR: acts by catalyzing deubiquitination of SPRTN, thereby promoting SPRTN recruitment to chromatin and subsequent proteolytic cleavage of covalent DNA-protein cross-links (DPCs). Hydrolyzes 'Lys-11'- and 'Lys-48'-linked polyubiquitin chains. In terms of biological role, (Microbial infection) Regulates the duration of C.botulinum neurotoxin type A (BoNT/A) intoxication by catalyzing deubiquitination of Botulinum neurotoxin A light chain (LC), thereby preventing LC degradation by the proteasome, and accelerating botulinum neurotoxin intoxication in patients. In Homo sapiens (Human), this protein is Deubiquitinating protein VCPIP1.